The sequence spans 217 residues: uncharacterized protein (217 aa).

Helical transmembrane passes span 9–29 (ISLASSVVATTVLVAPVLSTI), 54–74 (FLSTIIGAGYPIYKTYLLLEL), 103–125 (LMAYWCVYGCVTAAESILGRFLS), and 135–157 (IVFWLWLLNPRTQGAAFIYASYI).

This sequence belongs to the DP1 family.

It is found in the endoplasmic reticulum membrane. This is an uncharacterized protein from Schizosaccharomyces pombe (strain 972 / ATCC 24843) (Fission yeast).